Here is a 632-residue protein sequence, read N- to C-terminus: Cleavage stimulation factor subunit 2 tau variant (632 aa).

One can recognise an RRM domain in the interval 16–94 (RSVFVGNIPY…RALRVDNAAS (79 aa)). Disordered stretches follow at residues 201–296 (IPGK…PGGA) and 365–433 (YMGP…TRPM). Residues 213–233 (PGGPGPSGPGGPGPGPAPGLC) show a composition bias toward pro residues. Positions 234 to 244 (PGPNVMLNQQN) are enriched in low complexity. A compositionally biased stretch (pro residues) spans 275 to 287 (APGPIPAAVPGPG). Residues 365-375 (YMGPPHQGPPM) show a composition bias toward low complexity. Basic and acidic residues-rich tracts occupy residues 377 to 390 (HGHD…HDMR) and 420 to 433 (RGGR…TRPM). The stretch at 428 to 432 (METRP) is one 1-1; approximate repeat. Residues 428-466 (METRPMETEVLEPRGMERRMETCAMETRGMDARGLEMRG) are 8 X 5 AA tandem repeats of M-E-T-R-[AG]. One copy of the 1-2; approximate repeat lies at 433–437 (METEV). Residues 438 to 442 (LEPRG) form a 1-3; approximate repeat. The stretch at 443–446 (MERR) is one 1-4; approximate repeat. One copy of the 1-5; approximate repeat lies at 447–451 (METCA). One copy of the 1-6 repeat lies at 452-456 (METRG). The 1-7; approximate repeat unit spans residues 457–461 (MDARG). Residues 462 to 466 (LEMRG) form a 1-8; approximate repeat. The stretch at 508–512 (GGTMQ) is one 2-1; approximate repeat. The 12 X 5 AA tandem repeats of G-[AT]-G-[MI]-Q stretch occupies residues 508–565 (GGTMQGAGIQGGGMQGAGMQGGGMQGAGMQGGGMQGAGMQAGMQGASMQGGMQGAGMQ). The stretch at 513-517 (GAGIQ) is one 2-2 repeat. One copy of the 2-3; approximate repeat lies at 518–522 (GGGMQ). The segment covering 519 to 543 (GGMQGAGMQGGGMQGAGMQGGGMQG) has biased composition (gly residues). Residues 519–590 (GGMQGAGMQG…GQSQVTPQDQ (72 aa)) form a disordered region. One copy of the 2-4 repeat lies at 523–527 (GAGMQ). The stretch at 528-532 (GGGMQ) is one 2-5; approximate repeat. The 2-6 repeat unit spans residues 533-537 (GAGMQ). One copy of the 2-7; approximate repeat lies at 538–542 (GGGMQ). The 2-8 repeat unit spans residues 543-547 (GAGMQ). The segment covering 544–557 (AGMQAGMQGASMQG) has biased composition (low complexity). One copy of the 2-9; approximate repeat lies at 548 to 551 (AGMQ). The 2-10; approximate repeat unit spans residues 552 to 556 (GASMQ). A 2-11; approximate repeat occupies 557-560 (GGMQ). Gly residues predominate over residues 558–574 (GMQGAGMQGASKQGGGQ). The 2-12 repeat unit spans residues 561–565 (GAGMQ). A compositionally biased stretch (low complexity) spans 575 to 584 (PSSFSPGQSQ). Phosphoserine is present on serine 579.

In terms of tissue distribution, expressed in testes, where it is restricted to pachytene spermatocytes and spermatids, and in the brain (at protein level).

It is found in the nucleus. May play a significant role in AAUAAA-independent mRNA polyadenylation in germ cells. Directly involved in the binding to pre-mRNAs. The sequence is that of Cleavage stimulation factor subunit 2 tau variant (Cstf2t) from Mus musculus (Mouse).